We begin with the raw amino-acid sequence, 124 residues long: UPF0102 protein Meso_4010 (124 aa).

The protein belongs to the UPF0102 family.

This is UPF0102 protein Meso_4010 from Chelativorans sp. (strain BNC1).